Here is a 588-residue protein sequence, read N- to C-terminus: Arginine--tRNA ligase (588 aa).

The 'HIGH' region signature appears at 129 to 139; that stretch reads PNIAKEMHVGH.

Belongs to the class-I aminoacyl-tRNA synthetase family. As to quaternary structure, monomer.

It localises to the cytoplasm. The catalysed reaction is tRNA(Arg) + L-arginine + ATP = L-arginyl-tRNA(Arg) + AMP + diphosphate. The sequence is that of Arginine--tRNA ligase from Frankia casuarinae (strain DSM 45818 / CECT 9043 / HFP020203 / CcI3).